The sequence spans 464 residues: AAC-rich mRNA clone AAC11 protein (464 aa).

Residues 1–15 (MSTPTLPNLSQLHGI) show a composition bias toward polar residues. Disordered regions lie at residues 1–112 (MSTP…HGTN) and 125–464 (SLPQ…SFFH). 3 stretches are compositionally biased toward low complexity: residues 16–65 (QNQS…QQPQ), 78–88 (NPNGLGLMGHN), and 130–160 (INNN…NNSN). The span at 161-174 (LGINSSPTQSSANS) shows a compositional bias: polar residues. 3 consecutive DNA-binding regions (a.T hook) follow at residues 177–189 (KRSR…NPPS), 198–210 (KRKR…MDEE), and 224–236 (NKKR…PKDE). The segment covering 240-253 (DYNNTSFSDSNTDG) has biased composition (polar residues). The a.T hook 4 DNA-binding region spans 255–267 (PKKRGRPPKAKGD). Over residues 276 to 428 (NTLGNGILNS…NNAGNLGNLG (153 aa)) the composition is skewed to low complexity. Positions 433 to 464 (LHSSDPNNPNAQKSFPDSTNTMDFQPNFSFFH) are enriched in polar residues.

This Dictyostelium discoideum (Social amoeba) protein is AAC-rich mRNA clone AAC11 protein (AAC11).